We begin with the raw amino-acid sequence, 188 residues long: dCTP deaminase (188 aa).

DCTP contacts are provided by residues 111 to 116 (KSTYAR), 135 to 137 (TLE), Gln156, Tyr170, and Gln180. Catalysis depends on Glu137, which acts as the Proton donor/acceptor.

Belongs to the dCTP deaminase family. In terms of assembly, homotrimer.

It catalyses the reaction dCTP + H2O + H(+) = dUTP + NH4(+). It participates in pyrimidine metabolism; dUMP biosynthesis; dUMP from dCTP (dUTP route): step 1/2. Its function is as follows. Catalyzes the deamination of dCTP to dUTP. The protein is dCTP deaminase of Chromohalobacter salexigens (strain ATCC BAA-138 / DSM 3043 / CIP 106854 / NCIMB 13768 / 1H11).